A 464-amino-acid polypeptide reads, in one-letter code: Soluble pyridine nucleotide transhydrogenase (464 aa).

35–44 (DSRRQVGGNC) is an FAD binding site.

It belongs to the class-I pyridine nucleotide-disulfide oxidoreductase family. FAD is required as a cofactor.

Its subcellular location is the cytoplasm. The enzyme catalyses NAD(+) + NADPH = NADH + NADP(+). Conversion of NADPH, generated by peripheral catabolic pathways, to NADH, which can enter the respiratory chain for energy generation. In Pseudomonas savastanoi pv. phaseolicola (strain 1448A / Race 6) (Pseudomonas syringae pv. phaseolicola (strain 1448A / Race 6)), this protein is Soluble pyridine nucleotide transhydrogenase.